Consider the following 705-residue polypeptide: Polyribonucleotide nucleotidyltransferase (705 aa).

2 residues coordinate Mg(2+): Asp487 and Asp493. Residues 554-613 (PKILTMSINPDKIRDVIGPSGKQINKIIEDTGVKIDIEQDGTIFISSTDESMNQKAKKII) form the KH domain. An S1 motif domain is found at 623–691 (GQLYLGKVKR…KQGRVNLSRK (69 aa)).

The protein belongs to the polyribonucleotide nucleotidyltransferase family. It depends on Mg(2+) as a cofactor.

The protein resides in the cytoplasm. The catalysed reaction is RNA(n+1) + phosphate = RNA(n) + a ribonucleoside 5'-diphosphate. Involved in mRNA degradation. Catalyzes the phosphorolysis of single-stranded polyribonucleotides processively in the 3'- to 5'-direction. The protein is Polyribonucleotide nucleotidyltransferase of Bacillus licheniformis (strain ATCC 14580 / DSM 13 / JCM 2505 / CCUG 7422 / NBRC 12200 / NCIMB 9375 / NCTC 10341 / NRRL NRS-1264 / Gibson 46).